Here is a 760-residue protein sequence, read N- to C-terminus: Mitochondrial intermediate peptidase (760 aa).

The transit peptide at 1-19 (MLARSVRTLVVSPKTVFRF) directs the protein to the mitochondrion. Residue histidine 543 coordinates Zn(2+). Residue glutamate 544 is part of the active site. Histidine 547 is a Zn(2+) binding site.

This sequence belongs to the peptidase M3 family. It depends on Zn(2+) as a cofactor.

It localises to the mitochondrion matrix. It catalyses the reaction Release of an N-terminal octapeptide as second stage of processing of some proteins imported into the mitochondrion.. Its function is as follows. Cleaves proteins, imported into the mitochondrion, to their mature size. While most mitochondrial precursor proteins are processed to the mature form in one step by mitochondrial processing peptidase (MPP), the sequential cleavage by MIP of an octapeptide after initial processing by MPP is a required step for a subgroup of nuclear-encoded precursor proteins destined for the matrix or the inner membrane. The sequence is that of Mitochondrial intermediate peptidase (OCT1) from Leucoagaricus gongylophorus (Leaf-cutting ant fungus).